The chain runs to 407 residues: Arginine deiminase (407 aa).

Cys-397 acts as the Amidino-cysteine intermediate in catalysis.

The protein belongs to the arginine deiminase family.

Its subcellular location is the cytoplasm. It catalyses the reaction L-arginine + H2O = L-citrulline + NH4(+). The protein operates within amino-acid degradation; L-arginine degradation via ADI pathway; carbamoyl phosphate from L-arginine: step 1/2. The protein is Arginine deiminase of Salmonella choleraesuis (strain SC-B67).